A 223-amino-acid polypeptide reads, in one-letter code: Thymine-DNA glycosylase (223 aa).

[4Fe-4S] cluster is bound by residues Cys201, Cys208, Cys211, and Cys217.

It belongs to the Nth/MutY family. It depends on [4Fe-4S] cluster as a cofactor.

The catalysed reaction is Hydrolyzes mismatched double-stranded DNA and polynucleotides, releasing free thymine.. With respect to regulation, thymine cleavage is completely inhibited by Ni(2+), Co(2+), Zn(2+), Cu(2+) and Mn(2+). Activity is not affected by Mg(2+) and Ca(2+). Functionally, DNA glycosylase that excises thymine from T/G mismatches. Also has a weak DNA glycosylase activity on uracil paired with various bases. This chain is Thymine-DNA glycosylase, found in Aeropyrum pernix (strain ATCC 700893 / DSM 11879 / JCM 9820 / NBRC 100138 / K1).